A 322-amino-acid chain; its full sequence is Adenine deaminase (322 aa).

The Zn(2+) site is built by histidine 11, histidine 13, and histidine 189. Glutamate 192 acts as the Proton donor in catalysis. Aspartate 270 is a Zn(2+) binding site. Aspartate 271 contacts substrate.

It belongs to the metallo-dependent hydrolases superfamily. Adenosine and AMP deaminases family. Adenine deaminase type 2 subfamily. Requires Zn(2+) as cofactor.

It catalyses the reaction adenine + H2O + H(+) = hypoxanthine + NH4(+). Functionally, catalyzes the hydrolytic deamination of adenine to hypoxanthine. Plays an important role in the purine salvage pathway and in nitrogen catabolism. In Rhizobium etli (strain ATCC 51251 / DSM 11541 / JCM 21823 / NBRC 15573 / CFN 42), this protein is Adenine deaminase.